The sequence spans 359 residues: UDP-3-O-acylglucosamine N-acyltransferase (359 aa).

The active-site Proton acceptor is the His-256.

This sequence belongs to the transferase hexapeptide repeat family. LpxD subfamily. In terms of assembly, homotrimer.

The catalysed reaction is a UDP-3-O-[(3R)-3-hydroxyacyl]-alpha-D-glucosamine + a (3R)-hydroxyacyl-[ACP] = a UDP-2-N,3-O-bis[(3R)-3-hydroxyacyl]-alpha-D-glucosamine + holo-[ACP] + H(+). Its pathway is bacterial outer membrane biogenesis; LPS lipid A biosynthesis. In terms of biological role, catalyzes the N-acylation of UDP-3-O-acylglucosamine using 3-hydroxyacyl-ACP as the acyl donor. Is involved in the biosynthesis of lipid A, a phosphorylated glycolipid that anchors the lipopolysaccharide to the outer membrane of the cell. The chain is UDP-3-O-acylglucosamine N-acyltransferase from Rhodopseudomonas palustris (strain HaA2).